The chain runs to 671 residues: Annexin A6 (671 aa).

Annexin repeat units lie at residues 18 to 89, 90 to 161, 173 to 245, 249 to 320, 361 to 432, 433 to 504, 519 to 594, and 598 to 669; these read FNAS…SLMR, PPAY…VLLQ, DLVE…AVVK, STAE…KLCE, FNDD…GLML, TPAQ…SLAL, EDAK…AIVR, and NKPA…LCGG.

This sequence belongs to the annexin family.

It is found in the cytoplasm. The protein localises to the melanosome. May associate with CD21. May regulate the release of Ca(2+) from intracellular stores. The sequence is that of Annexin A6 (ANXA6) from Gallus gallus (Chicken).